The sequence spans 177 residues: Large ribosomal subunit protein bL9 (177 aa).

The protein belongs to the bacterial ribosomal protein bL9 family.

In terms of biological role, binds to the 23S rRNA. In Rhodopirellula baltica (strain DSM 10527 / NCIMB 13988 / SH1), this protein is Large ribosomal subunit protein bL9.